We begin with the raw amino-acid sequence, 393 residues long: Alpha-1,2 mannosyltransferase KTR1 (393 aa).

At 1-16 (MAKIMIPASKQPVYKK) the chain is on the cytoplasmic side. Residues 17 to 34 (LGLLLVAVFTVYVFFHGA) form a helical; Signal-anchor for type II membrane protein membrane-spanning segment. Residues 35–68 (QYARGSAPSPKYSTVLSSGSGYKYSKVELPKYTG) are stem region. Residues 35 to 393 (QYARGSAPSP…KPAGWQNHIG (359 aa)) are Lumenal-facing. Residues 69–393 (PREKATFVTL…KPAGWQNHIG (325 aa)) are catalytic. Asn-120 carries N-linked (GlcNAc...) asparagine glycosylation. The Nucleophile role is filled by Glu-280.

This sequence belongs to the glycosyltransferase 15 family. It depends on Mn(2+) as a cofactor. N-glycosylated.

It is found in the golgi apparatus membrane. It participates in protein modification; protein glycosylation. Its function is as follows. Mannosyltransferase that transfers a mannose residue from GDP-mannose to a range of acceptors in vitro, forming an alpha-(1-&gt;2)-D-mannosyl-D-mannose linkage. The chain is Alpha-1,2 mannosyltransferase KTR1 (KTR1) from Saccharomyces cerevisiae (strain ATCC 204508 / S288c) (Baker's yeast).